The following is a 196-amino-acid chain: Large ribosomal subunit protein bL9 (196 aa).

The protein belongs to the bacterial ribosomal protein bL9 family.

In terms of biological role, binds to the 23S rRNA. This chain is Large ribosomal subunit protein bL9, found in Rhodopseudomonas palustris (strain HaA2).